A 124-amino-acid polypeptide reads, in one-letter code: Small ribosomal subunit protein uS12 (124 aa).

Position 89 is a 3-methylthioaspartic acid (Asp89). The segment at 103-124 (DTAGVKDRRQGRSKYGAKRPKD) is disordered. The span at 113–124 (GRSKYGAKRPKD) shows a compositional bias: basic residues.

It belongs to the universal ribosomal protein uS12 family. As to quaternary structure, part of the 30S ribosomal subunit. Contacts proteins S8 and S17. May interact with IF1 in the 30S initiation complex.

Functionally, with S4 and S5 plays an important role in translational accuracy. Interacts with and stabilizes bases of the 16S rRNA that are involved in tRNA selection in the A site and with the mRNA backbone. Located at the interface of the 30S and 50S subunits, it traverses the body of the 30S subunit contacting proteins on the other side and probably holding the rRNA structure together. The combined cluster of proteins S8, S12 and S17 appears to hold together the shoulder and platform of the 30S subunit. This chain is Small ribosomal subunit protein uS12, found in Acaryochloris marina (strain MBIC 11017).